The following is a 389-amino-acid chain: Apicidin F cluster transcription factor apf2 (389 aa).

Polar residues-rich tracts occupy residues 1 to 13 (MSPP…TITD) and 75 to 84 (PDSATPKPSL). 3 disordered regions span residues 1 to 27 (MSPP…VAQR), 65 to 84 (PQSV…KPSL), and 219 to 239 (EVPN…TKQP). A basic DNA-binding region region spans residues 12–38 (TDANERRKAQNRVAQRNYRSRQKLRVE). 4 ANK repeats span residues 241-270 (EFKT…NIDT), 274-303 (HGRT…DLLM), 307-336 (SGVT…QQDR), and 357-386 (QNMT…DVNI).

This sequence belongs to the bZIP family. Highly divergent.

It is found in the nucleus. Functionally, transcription factor that regulates the expression of the gene cluster that mediates the biosynthesis of apicidin F. Binds to the eight-base-pair motif 5'-TGACGTGA-3' called the 'Api-box' that is found in all promoters of the apicidin F cluster except in the promoter region of apf2 itself. This chain is Apicidin F cluster transcription factor apf2, found in Gibberella fujikuroi (strain CBS 195.34 / IMI 58289 / NRRL A-6831) (Bakanae and foot rot disease fungus).